The primary structure comprises 558 residues: Solute carrier family 22 member 6-A (558 aa).

Over 1-15 (MSFAELLERTGGMGR) the chain is Cytoplasmic. A helical membrane pass occupies residues 16–36 (FQITQVALMCFPILLMASHNL). The Extracellular portion of the chain corresponds to 37 to 140 (LQNFSAAIPD…LVCGHKNRRQ (104 aa)). The chain crosses the membrane as a helical span at residues 141-161 (LAQSVYMGGVLVGAIILGGLS). Topologically, residues 162–167 (DRYGRR) are cytoplasmic. The helical transmembrane segment at 168–188 (ALLIWSYFQMAVSGLCSAFSP) threads the bilayer. Residues 189 to 197 (NYLSYCIFR) are Extracellular-facing. A helical transmembrane segment spans residues 198-218 (FLTGMALSGIGLNTTALIVEW). Over 219 to 225 (VPTRVRT) the chain is Cytoplasmic. The chain crosses the membrane as a helical span at residues 226-246 (ITGTLAGFSYTVGQLLLAGLA). Topologically, residues 247–253 (YAMRDWR) are extracellular. A helical transmembrane segment spans residues 254–274 (WLQLCVSLPFFIFFLYSWWFP). Residues 275 to 342 (ESARWLVLSG…DLIRTSTIRR (68 aa)) lie on the Cytoplasmic side of the membrane. Residues 343-363 (ISCALSLVWFSTSFAYYGLAM) form a helical membrane-spanning segment. Residues 364–369 (DLQNFN) are Extracellular-facing. The chain crosses the membrane as a helical span at residues 370–390 (VSIYLIQVIFGAVDFPAKIFS). Residues 391-400 (TTAMIYVGRK) lie on the Cytoplasmic side of the membrane. Residues 401–421 (FTQLMSLILGGVVILANSFVP) form a helical membrane-spanning segment. Residues 422–428 (HEMQTVR) are Extracellular-facing. Residues 429-449 (TGMAVFGKGCLAASFSCVFLY) traverse the membrane as a helical segment. The Cytoplasmic portion of the chain corresponds to 450–462 (TTELYPTVIRQSG). Residues 463-483 (LGLCSTMARIGGIVAPLVKIL) form a helical membrane-spanning segment. Residues 484 to 488 (GEYYP) are Extracellular-facing. A helical membrane pass occupies residues 489–509 (FLPLVIYGGAPIISGLCVFFL). Topologically, residues 510 to 558 (PETVNKPLPDTIEEVEKRIKAPKKENEMNEIVSLKKKEGMKENPVNDVL) are cytoplasmic. Over residues 539–550 (EIVSLKKKEGMK) the composition is skewed to basic and acidic residues. Residues 539–558 (EIVSLKKKEGMKENPVNDVL) form a disordered region.

Belongs to the major facilitator (TC 2.A.1) superfamily. Organic cation transporter (TC 2.A.1.19) family. In terms of processing, glycosylated. Glycosylation is necessary for proper targeting of the transporter to the plasma membrane.

It localises to the cell membrane. The protein localises to the basolateral cell membrane. Its subcellular location is the basal cell membrane. Functionally, involved in the renal elimination of endogenous and exogenous organic anions. Mediates the sodium-independent uptake of p-aminohippurate (PAH), 2,3-dimercapto-1-propanesulfonic acid (DMPS), cidofovir, adefovir, 9-(2-phosphonylmethoxyethyl) guanine (PMEG), 9-(2-phosphonylmethoxyethyl) diaminopurine (PMEDAP), ochratoxin (OTA), acyclovir (ACV), 3'-azido-3-'deoxythymidine (AZT), cimetidine (CMD), 2,4-dichloro-phenoxyacetate (2,4-D), hippurate (HA), indoleacetate (IA), indoxyl sulfate (IS) and 3-carboxy-4-methyl-5-propyl-2-furanpropionate (CMPF) and edaravone sulfate. PAH uptake is inhibited by p-chloromercuribenzenesulphonate (PCMBS), diethyl pyrocarbonate (DEPC), indomethacin, sulindac, diclofenac, carprofen, okadaic acid, benzothiazolylcysteine (BTC), S-chlorotrifluoroethylcysteine (CTFC), cysteine S-conjugates S-dichlorovinylcysteine (DCVC), furosemide, steviol, phorbol 12-myristate 13-acetate (PMA), calcium ionophore A23187, benzylpenicillin, bumetamide, losartan, probenecid, phenol red, urate, glutarate and alpha-ketoglutarate. The polypeptide is Solute carrier family 22 member 6-A (slc22a6-a) (Xenopus laevis (African clawed frog)).